The following is a 523-amino-acid chain: 2-isopropylmalate synthase (523 aa).

Residues valine 5–tryptophan 267 form the Pyruvate carboxyltransferase domain. Mn(2+) is bound by residues aspartate 14, histidine 202, histidine 204, and asparagine 238. The segment at arginine 392–valine 523 is regulatory domain.

This sequence belongs to the alpha-IPM synthase/homocitrate synthase family. LeuA type 1 subfamily. As to quaternary structure, homodimer. Mn(2+) serves as cofactor.

The protein localises to the cytoplasm. It carries out the reaction 3-methyl-2-oxobutanoate + acetyl-CoA + H2O = (2S)-2-isopropylmalate + CoA + H(+). Its pathway is amino-acid biosynthesis; L-leucine biosynthesis; L-leucine from 3-methyl-2-oxobutanoate: step 1/4. Catalyzes the condensation of the acetyl group of acetyl-CoA with 3-methyl-2-oxobutanoate (2-ketoisovalerate) to form 3-carboxy-3-hydroxy-4-methylpentanoate (2-isopropylmalate). This chain is 2-isopropylmalate synthase, found in Enterobacter sp. (strain 638).